A 491-amino-acid polypeptide reads, in one-letter code: Probable glycine dehydrogenase (decarboxylating) subunit 2 (491 aa).

At Lys273 the chain carries N6-(pyridoxal phosphate)lysine.

It belongs to the GcvP family. C-terminal subunit subfamily. The glycine cleavage system is composed of four proteins: P, T, L and H. In this organism, the P 'protein' is a heterodimer of two subunits. Pyridoxal 5'-phosphate is required as a cofactor.

The catalysed reaction is N(6)-[(R)-lipoyl]-L-lysyl-[glycine-cleavage complex H protein] + glycine + H(+) = N(6)-[(R)-S(8)-aminomethyldihydrolipoyl]-L-lysyl-[glycine-cleavage complex H protein] + CO2. The glycine cleavage system catalyzes the degradation of glycine. The P protein binds the alpha-amino group of glycine through its pyridoxal phosphate cofactor; CO(2) is released and the remaining methylamine moiety is then transferred to the lipoamide cofactor of the H protein. This is Probable glycine dehydrogenase (decarboxylating) subunit 2 from Bacillus velezensis (strain DSM 23117 / BGSC 10A6 / LMG 26770 / FZB42) (Bacillus amyloliquefaciens subsp. plantarum).